The sequence spans 131 residues: Urease subunit beta (131 aa).

The tract at residues Pro100 to Ala131 is disordered.

This sequence belongs to the urease beta subunit family. As to quaternary structure, heterotrimer of UreA (gamma), UreB (beta) and UreC (alpha) subunits. Three heterotrimers associate to form the active enzyme.

The protein localises to the cytoplasm. The catalysed reaction is urea + 2 H2O + H(+) = hydrogencarbonate + 2 NH4(+). It participates in nitrogen metabolism; urea degradation; CO(2) and NH(3) from urea (urease route): step 1/1. The protein is Urease subunit beta of Kocuria rhizophila (strain ATCC 9341 / DSM 348 / NBRC 103217 / DC2201).